The chain runs to 102 residues: Acid shock protein (102 aa).

The N-terminal stretch at 1 to 21 (MKKVLALVVAAAMGLSSAAFA) is a signal peptide. A propeptide spanning residues 22–58 (AETAITPAPTATTTKAAPAKTTHHKKQHKAAPAQKAQ) is cleaved from the precursor. Over residues 26–41 (ITPAPTATTTKAAPAK) the composition is skewed to low complexity. A disordered region spans residues 26-102 (ITPAPTATTT…PAKPAAQPAA (77 aa)). Residues 80 to 90 (AAKKHAKKHSH) are compositionally biased toward basic residues. Residues 91–102 (QQPAKPAAQPAA) show a composition bias toward low complexity.

The protein belongs to the Asr family. In terms of processing, proteolytic processing gives rise to the active protein.

Its subcellular location is the periplasm. Functionally, required for growth and/or survival at acidic conditions. This is Acid shock protein from Escherichia coli O81 (strain ED1a).